A 166-amino-acid polypeptide reads, in one-letter code: Small ribosomal subunit protein uS9 (166 aa).

Acidic residues predominate over residues 1–16; the sequence is MSDTTNEVEETYEVDE. Positions 1–45 are disordered; the sequence is MSDTTNEVEETYEVDEQGIAYSSESAPSADAPLRPATIAPANATG.

Belongs to the universal ribosomal protein uS9 family.

The protein is Small ribosomal subunit protein uS9 of Nocardioides sp. (strain ATCC BAA-499 / JS614).